We begin with the raw amino-acid sequence, 491 residues long: Glutamyl-tRNA(Gln) amidotransferase subunit A (491 aa).

Catalysis depends on charge relay system residues Lys80 and Ser155. The active-site Acyl-ester intermediate is the Ser179.

The protein belongs to the amidase family. GatA subfamily. As to quaternary structure, heterotrimer of A, B and C subunits.

The catalysed reaction is L-glutamyl-tRNA(Gln) + L-glutamine + ATP + H2O = L-glutaminyl-tRNA(Gln) + L-glutamate + ADP + phosphate + H(+). Functionally, allows the formation of correctly charged Gln-tRNA(Gln) through the transamidation of misacylated Glu-tRNA(Gln) in organisms which lack glutaminyl-tRNA synthetase. The reaction takes place in the presence of glutamine and ATP through an activated gamma-phospho-Glu-tRNA(Gln). This Salinispora arenicola (strain CNS-205) protein is Glutamyl-tRNA(Gln) amidotransferase subunit A.